The primary structure comprises 165 residues: HTH-type transcriptional regulator MmpR5 (165 aa).

Positions 1-151 (MSVNDGVDQM…LLAYMENVVS (151 aa)) constitute an HTH marR-type domain. The segment at residues 53 to 76 (SEELATALAASSGGISTNARMLIQ) is a DNA-binding region (H-T-H motif).

In terms of assembly, homodimer.

Functionally, controls the expression level of the Mmps2-MmpL2, MmpS4-MmpL4, and MmpS5-MmpL5 transport systems. Also controls its own expression. Acts by binding directly to the promoter regions. The sequence is that of HTH-type transcriptional regulator MmpR5 from Mycobacterium tuberculosis (strain ATCC 25618 / H37Rv).